A 328-amino-acid chain; its full sequence is Cell division protein ZipA (328 aa).

The Periplasmic portion of the chain corresponds to 1-4 (MDLN). A helical membrane pass occupies residues 5–25 (TILIIVGIVALVALIVHGLWS). Residues 26-328 (NRREKSKYFD…NAEQAYLARV (303 aa)) are Cytoplasmic-facing. Residues 44 to 82 (SLTSRSHTQEEMVQPNNISPNTYVENGHTPIPQPTTEKL) form a disordered region. The span at 57–67 (QPNNISPNTYV) shows a compositional bias: polar residues.

The protein belongs to the ZipA family. In terms of assembly, interacts with FtsZ via their C-terminal domains.

Its subcellular location is the cell inner membrane. Its function is as follows. Essential cell division protein that stabilizes the FtsZ protofilaments by cross-linking them and that serves as a cytoplasmic membrane anchor for the Z ring. Also required for the recruitment to the septal ring of downstream cell division proteins. This Haemophilus influenzae (strain ATCC 51907 / DSM 11121 / KW20 / Rd) protein is Cell division protein ZipA.